Consider the following 108-residue polypeptide: ATP synthase peripheral stalk subunit F6, mitochondrial (108 aa).

Residues 1–32 constitute a mitochondrion transit peptide; the sequence is MVLQRIFRLSSVLRSAVSVHLKRNIGVTAVAF. Residues K41, K46, and K79 each carry the N6-acetyllysine modification. N6-acetyllysine; alternate occurs at positions 84, 94, and 99. N6-succinyllysine; alternate occurs at positions 84, 94, and 99. An N6-acetyllysine modification is found at K105. S108 bears the Phosphoserine mark.

It belongs to the eukaryotic ATPase subunit F6 family. As to quaternary structure, component of the ATP synthase complex composed at least of ATP5F1A/subunit alpha, ATP5F1B/subunit beta, ATP5MC1/subunit c (homooctomer), MT-ATP6/subunit a, MT-ATP8/subunit 8, ATP5ME/subunit e, ATP5MF/subunit f, ATP5MG/subunit g, ATP5MK/subunit k, ATP5MJ/subunit j, ATP5F1C/subunit gamma, ATP5F1D/subunit delta, ATP5F1E/subunit epsilon, ATP5PF/subunit F6, ATP5PB/subunit b, ATP5PD/subunit d, ATP5PO/subunit OSCP. ATP synthase complex consists of a soluble F(1) head domain (subunits alpha(3) and beta(3)) - the catalytic core - and a membrane F(0) domain - the membrane proton channel (subunits c, a, 8, e, f, g, k and j). These two domains are linked by a central stalk (subunits gamma, delta, and epsilon) rotating inside the F1 region and a stationary peripheral stalk (subunits F6, b, d, and OSCP).

The protein resides in the mitochondrion. Its subcellular location is the mitochondrion inner membrane. In terms of biological role, subunit F6, of the mitochondrial membrane ATP synthase complex (F(1)F(0) ATP synthase or Complex V) that produces ATP from ADP in the presence of a proton gradient across the membrane which is generated by electron transport complexes of the respiratory chain. ATP synthase complex consist of a soluble F(1) head domain - the catalytic core - and a membrane F(1) domain - the membrane proton channel. These two domains are linked by a central stalk rotating inside the F(1) region and a stationary peripheral stalk. During catalysis, ATP synthesis in the catalytic domain of F(1) is coupled via a rotary mechanism of the central stalk subunits to proton translocation. In vivo, can only synthesize ATP although its ATP hydrolase activity can be activated artificially in vitro. Part of the complex F(0) domain. Part of the complex F(0) domain and the peripheric stalk, which acts as a stator to hold the catalytic alpha(3)beta(3) subcomplex and subunit a/ATP6 static relative to the rotary elements. The protein is ATP synthase peripheral stalk subunit F6, mitochondrial of Mus musculus (Mouse).